The sequence spans 37 residues: MKVRPSVKKMCDKCKVVRRKGVVRIICENPKHKQRQG.

It belongs to the bacterial ribosomal protein bL36 family.

The polypeptide is Large ribosomal subunit protein bL36 (Campylobacter jejuni subsp. jejuni serotype O:6 (strain 81116 / NCTC 11828)).